The chain runs to 142 residues: Large ribosomal subunit protein uL13 (142 aa).

Belongs to the universal ribosomal protein uL13 family. Part of the 50S ribosomal subunit.

Its function is as follows. This protein is one of the early assembly proteins of the 50S ribosomal subunit, although it is not seen to bind rRNA by itself. It is important during the early stages of 50S assembly. The protein is Large ribosomal subunit protein uL13 of Trichlorobacter lovleyi (strain ATCC BAA-1151 / DSM 17278 / SZ) (Geobacter lovleyi).